A 517-amino-acid chain; its full sequence is Retinal dehydrogenase 2 (517 aa).

Residues 184–186 (IPW), 210–213 (KPAE), and 264–266 (STE) contribute to the NAD(+) site. Glutamate 286 serves as the catalytic Proton acceptor. Cysteine 320 serves as the catalytic Nucleophile. NAD(+) contacts are provided by residues 366-370 (KQYNK) and glutamate 417.

Belongs to the aldehyde dehydrogenase family. Homotetramer. Expressed in the high vocal center (HVC) which integrates auditory and motor activities and constitutes a nodal nucleus on the song system.

The protein resides in the cytoplasm. The catalysed reaction is retinal + NAD(+) + H2O = retinoate + NADH + 2 H(+). It carries out the reaction all-trans-retinal + NAD(+) + H2O = all-trans-retinoate + NADH + 2 H(+). It catalyses the reaction all-trans-13,14-dihydroretinal + NAD(+) + H2O = all-trans-13,14-dihydroretinoate + NADH + 2 H(+). Its pathway is cofactor metabolism; retinol metabolism. Its function is as follows. Catalyzes the NAD-dependent oxidation of aldehyde substrates, such as all-trans-retinal and all-trans-13,14-dihydroretinal, to their corresponding carboxylic acids, all-trans-retinoate and all-trans-13,14-dihydroretinoate, respectively. Retinoate signaling is critical for the transcriptional control of many genes, for instance it is crucial for initiation of meiosis in both male and female. Recognizes retinal as substrate, both in its free form and when bound to cellular retinol-binding protein. Lacks activity with benzaldehyde, acetaldehyde and octanal. Displays complete lack of activity with citral. Plays a significant role in the acquisition and production of learned songs. In Taeniopygia guttata (Zebra finch), this protein is Retinal dehydrogenase 2 (ALDH1A2).